A 1074-amino-acid polypeptide reads, in one-letter code: Semaphorin-5A (1074 aa).

Positions 1–22 are cleaved as a signal peptide; sequence MKGTCVIAWLFSSLGLWRLAHP. Residues 23-968 lie on the Extracellular side of the membrane; sequence EAQGTTQCQR…EEKRCGEFNM (946 aa). Residues 35–484 form the Sema domain; the sequence is HPVISYKEIG…LREHVVKIPL (450 aa). 2 cysteine pairs are disulfide-bonded: cysteine 104-cysteine 114 and cysteine 131-cysteine 140. N-linked (GlcNAc...) asparagine glycosylation is found at asparagine 142, asparagine 168, asparagine 227, and asparagine 277. 2 cysteine pairs are disulfide-bonded: cysteine 254-cysteine 357 and cysteine 278-cysteine 320. N-linked (GlcNAc...) asparagine glycans are attached at residues asparagine 323, asparagine 367, and asparagine 437. Cystine bridges form between cysteine 487/cysteine 504 and cysteine 496/cysteine 513. Residues asparagine 536 and asparagine 591 are each glycosylated (N-linked (GlcNAc...) asparagine). TSP type-1 domains are found at residues 540–593, 595–651, 653–702, 707–765, 784–839, 841–896, and 897–944; these read DGHF…ANCS, NGGW…LLCP, HMFW…NPCP, TTPW…GCST, NGAW…LPCP, DGVW…QPCP, and ESWS…VFDS. Disulfide bonds link cysteine 607/cysteine 644, cysteine 611/cysteine 650, cysteine 622/cysteine 634, cysteine 665/cysteine 696, cysteine 669/cysteine 701, and cysteine 680/cysteine 686. Residue asparagine 717 is glycosylated (N-linked (GlcNAc...) asparagine). Cystine bridges form between cysteine 796–cysteine 833, cysteine 800–cysteine 838, cysteine 811–cysteine 823, cysteine 853–cysteine 890, cysteine 857–cysteine 895, and cysteine 868–cysteine 880. Asparagine 933 is a glycosylation site (N-linked (GlcNAc...) asparagine). Residues 969 to 989 traverse the membrane as a helical segment; it reads FHMIAVGLSSSILGCLLTLLV. The Cytoplasmic portion of the chain corresponds to 990 to 1074; sequence YTYCQRYQQQ…FTDLNNYDEY (85 aa).

This sequence belongs to the semaphorin family. In terms of assembly, binds PLXNB3.

It localises to the membrane. Bifunctional axonal guidance cue regulated by sulfated proteoglycans; attractive effects result from interactions with heparan sulfate proteoglycans (HSPGs), while the inhibitory effects depend on interactions with chondroitin sulfate proteoglycans (CSPGs). Ligand for receptor PLXNB3. In glioma cells, SEMA5A stimulation of PLXNB3 results in the disassembly of F-actin stress fibers, disruption of focal adhesions and cellular collapse as well as inhibition of cell migration and invasion through ARHGDIA-mediated inactivation of RAC1. May promote angiogenesis by increasing endothelial cell proliferation and migration and inhibiting apoptosis. In Homo sapiens (Human), this protein is Semaphorin-5A (SEMA5A).